Reading from the N-terminus, the 414-residue chain is Putative competence-damage inducible protein (414 aa).

It belongs to the CinA family.

The chain is Putative competence-damage inducible protein from Listeria monocytogenes serotype 4b (strain CLIP80459).